Reading from the N-terminus, the 370-residue chain is Glutamate 5-kinase (370 aa).

Lys-11 provides a ligand contact to ATP. Residues Ser-52, Asp-139, and Asn-151 each coordinate substrate. Residues 171-172 (TD) and 213-219 (TGGMATK) contribute to the ATP site. The PUA domain occupies 278 to 356 (TGKLLLDAGA…DQIVQILGYE (79 aa)).

It belongs to the glutamate 5-kinase family.

It is found in the cytoplasm. It catalyses the reaction L-glutamate + ATP = L-glutamyl 5-phosphate + ADP. It participates in amino-acid biosynthesis; L-proline biosynthesis; L-glutamate 5-semialdehyde from L-glutamate: step 1/2. Functionally, catalyzes the transfer of a phosphate group to glutamate to form L-glutamate 5-phosphate. The polypeptide is Glutamate 5-kinase (Synechococcus sp. (strain ATCC 27144 / PCC 6301 / SAUG 1402/1) (Anacystis nidulans)).